The chain runs to 62 residues: Teretoxin Tan1.1 (62 aa).

The N-terminal stretch at 1-21 is a signal peptide; it reads MSCFPVLFVMMLLVSQSVWAF. The propeptide occupies 22-38; that stretch reads PGPETRDGSVQDAESRR.

It belongs to the teretoxin A (TA) superfamily. In terms of processing, contains 2 disulfide bonds. In terms of tissue distribution, expressed by the venom duct.

The protein resides in the secreted. The polypeptide is Teretoxin Tan1.1 (Terebra anilis (Auger snail)).